Consider the following 410-residue polypeptide: Elongation factor Tu, chloroplastic (410 aa).

A tr-type G domain is found at lysine 10 to glutamine 215. The segment at glycine 19–threonine 26 is G1. Residue glycine 19–threonine 26 participates in GTP binding. Threonine 26 contributes to the Mg(2+) binding site. A G2 region spans residues glycine 61–asparagine 65. Positions aspartate 82–glycine 85 are G3. Residues aspartate 82–histidine 86 and asparagine 137–aspartate 140 each bind GTP. Residues asparagine 137 to aspartate 140 are G4. The tract at residues serine 175–leucine 177 is G5.

This sequence belongs to the TRAFAC class translation factor GTPase superfamily. Classic translation factor GTPase family. EF-Tu/EF-1A subfamily.

The protein localises to the plastid. It localises to the chloroplast. It carries out the reaction GTP + H2O = GDP + phosphate + H(+). GTP hydrolase that promotes the GTP-dependent binding of aminoacyl-tRNA to the A-site of ribosomes during protein biosynthesis. The protein is Elongation factor Tu, chloroplastic (tufA) of Cyanidioschyzon merolae (strain NIES-3377 / 10D) (Unicellular red alga).